The primary structure comprises 393 residues: Large ribosomal subunit protein uL2m (393 aa).

The transit peptide at 1–43 (MLVLGSLRSALSCSSTASLISKRNPCYPYGILCRTLSQSVKLW) directs the protein to the mitochondrion. The disordered stretch occupies residues 337–393 (AMNKCDHPHGGGRGKSKSNKLSMSPWGQLAKGYKTRRGKNQNRMKVKDRPRGKDARL). The segment covering 369–380 (YKTRRGKNQNRM) has biased composition (basic residues). Residues 381–393 (KVKDRPRGKDARL) are compositionally biased toward basic and acidic residues.

The protein belongs to the universal ribosomal protein uL2 family. As to quaternary structure, component of the mitochondrial large ribosomal subunit (mt-LSU). Mature yeast 74S mitochondrial ribosomes consist of a small (37S) and a large (54S) subunit. The 37S small subunit contains a 15S ribosomal RNA (15S mt-rRNA) and 34 different proteins. The 54S large subunit contains a 21S rRNA (21S mt-rRNA) and 46 different proteins. uL2m has a Na/K ligand binding site.

It is found in the mitochondrion. In terms of biological role, component of the mitochondrial ribosome (mitoribosome), a dedicated translation machinery responsible for the synthesis of mitochondrial genome-encoded proteins, including at least some of the essential transmembrane subunits of the mitochondrial respiratory chain. The mitoribosomes are attached to the mitochondrial inner membrane and translation products are cotranslationally integrated into the membrane. In Saccharomyces cerevisiae (strain ATCC 204508 / S288c) (Baker's yeast), this protein is Large ribosomal subunit protein uL2m (RML2).